We begin with the raw amino-acid sequence, 61 residues long: Small ribosomal subunit protein uS14 (61 aa).

Zn(2+) contacts are provided by C24, C27, C40, and C43.

Belongs to the universal ribosomal protein uS14 family. Zinc-binding uS14 subfamily. As to quaternary structure, part of the 30S ribosomal subunit. Contacts proteins S3 and S10. Zn(2+) is required as a cofactor.

Its function is as follows. Binds 16S rRNA, required for the assembly of 30S particles and may also be responsible for determining the conformation of the 16S rRNA at the A site. The polypeptide is Small ribosomal subunit protein uS14 (Clostridium botulinum (strain Alaska E43 / Type E3)).